A 333-amino-acid polypeptide reads, in one-letter code: Ferrochelatase (333 aa).

Fe cation-binding residues include His-202 and Glu-284.

This sequence belongs to the ferrochelatase family.

It localises to the cytoplasm. The enzyme catalyses heme b + 2 H(+) = protoporphyrin IX + Fe(2+). Its pathway is porphyrin-containing compound metabolism; protoheme biosynthesis; protoheme from protoporphyrin-IX: step 1/1. In terms of biological role, catalyzes the ferrous insertion into protoporphyrin IX. In Francisella tularensis subsp. tularensis (strain FSC 198), this protein is Ferrochelatase.